The primary structure comprises 319 residues: MIKLGIVMDPISSINIKKDTSFAMLLEAQRRGWELHYMEMGDLYMRGGDGRARTRRLNVKQDKDNWFSFGAEQDLPLYDLDVILMRKDPPFDTEFIYATYILERAEDKGTLVVNKPQSLRDCNEKLFTAWFPELTPDTLVSRSKDHIRKFHQEHGDIILKPLDGMGGTSIFRVKQDDPNLSVIIETLTELSSRFCMAQNFLPAIKEGDKRVLVVDGEPVPYCLARIPAQGETRGNLAAGGRGEARPLSESDWEIARTVAPILKQKGLIFVGLDIIGDRLTEINVTSPTCVREIEAAFPEISITGMLMDAIERRLADKKA.

Residues K125–E311 enclose the ATP-grasp domain. Residue H151 to G207 coordinates ATP. Mg(2+) is bound by residues E281 and N283.

Belongs to the prokaryotic GSH synthase family. The cofactor is Mg(2+). Mn(2+) serves as cofactor.

The enzyme catalyses gamma-L-glutamyl-L-cysteine + glycine + ATP = glutathione + ADP + phosphate + H(+). Its pathway is sulfur metabolism; glutathione biosynthesis; glutathione from L-cysteine and L-glutamate: step 2/2. This chain is Glutathione synthetase, found in Yersinia pestis.